We begin with the raw amino-acid sequence, 1087 residues long: Platelet-derived growth factor receptor alpha (1087 aa).

The signal sequence occupies residues 1 to 24 (MMPAMRASLILGCLLIIGPWAILA). The Extracellular segment spans residues 25 to 530 (ENPLPTIFPD…PTLRSELTVA (506 aa)). Ig-like C2-type domains are found at residues 27–114 (PLPT…SEIE) and 118–211 (IYIY…LQTW). Cys-50 and Cys-101 form a disulfide bridge. 2 N-linked (GlcNAc...) asparagine glycosylation sites follow: Asn-77 and Asn-104. Cys-151 and Cys-192 are disulfide-bonded. N-linked (GlcNAc...) asparagine glycans are attached at residues Asn-216, Asn-282, Asn-309, Asn-356, Asn-362, Asn-461, and Asn-471. Ig-like C2-type domains follow at residues 217 to 309 (ISVE…KKTN), 315 to 409 (KGFI…KSYS), and 417 to 519 (PALI…LKLV). Residues Cys-238 and Cys-293 are joined by a disulfide bond. A disulfide bridge links Cys-438 with Cys-503. The helical transmembrane segment at 531-551 (AAVLVLLVIVIISLIVLVIIW) threads the bilayer. At 552–1087 (KQKPRYEIRW…SSDLVEDSFL (536 aa)) the chain is on the cytoplasmic side. Tyr-574 and Tyr-576 each carry phosphotyrosine; by autocatalysis. The 376-residue stretch at 595–970 (LVLGRILGSG…CYETVLHDFL (376 aa)) folds into the Protein kinase domain. ATP-binding positions include 601–609 (LGSGAFGKV) and Lys-629. Phosphotyrosine; by autocatalysis occurs at positions 722, 733, 744, 756, and 764. The Proton acceptor role is filled by Asp-818. A phosphotyrosine; by autocatalysis mark is found at Tyr-849, Tyr-988, and Tyr-1017. A disordered region spans residues 1017–1064 (YIIPLPDIDPVSEDESGKRNRHSSQTSEESAIETGSSSSTFIKRDDET). Polar residues predominate over residues 1039–1057 (SSQTSEESAIETGSSSSTF).

The protein belongs to the protein kinase superfamily. Tyr protein kinase family. CSF-1/PDGF receptor subfamily. Interacts with homodimeric pdgfa, pdgfb and pdgfc, and with heterodimers formed by pdgfa and pdgfb. Monomer in the absence of bound ligand. Interaction with dimeric pdgfa, pdgfb and/or pdgfc leads to receptor dimerization, where both pdgfra homodimers and heterodimers with pdgfrb are observed. Ubiquitinated, leading to its internalization and degradation. In terms of processing, autophosphorylated on tyrosine residues upon ligand binding. Autophosphorylation occurs in trans, i.e. one subunit of the dimeric receptor phosphorylates tyrosine residues on the other subunit.

Its subcellular location is the cell membrane. The protein localises to the cell projection. The protein resides in the cilium. It is found in the golgi apparatus. The catalysed reaction is L-tyrosyl-[protein] + ATP = O-phospho-L-tyrosyl-[protein] + ADP + H(+). With respect to regulation, present in an inactive conformation in the absence of bound ligand. Binding of pdgfa and/or pdgfb leads to dimerization and activation by autophosphorylation on tyrosine residues. Functionally, tyrosine-protein kinase that acts as a cell-surface receptor for pdgfa, pdgfb and pdgfc and plays an essential role in the regulation of embryonic development, cell proliferation, survival and chemotaxis. Depending on the context, promotes or inhibits cell proliferation and cell migration. Plays an important role in the differentiation of bone marrow-derived mesenchymal stem cells. Required for normal skeleton development. Required for normal development of the gastrointestinal tract. Plays a role in cell migration and chemotaxis in wound healing. Plays a role in platelet activation, secretion of agonists from platelet granules, and in thrombin-induced platelet aggregation. Binding of its cognate ligands - homodimeric pdgfa, homodimeric pdgfb, heterodimers formed by pdgfa and pdgfb or homodimeric pdgfc -leads to the activation of several signaling cascades; the response depends on the nature of the bound ligand and is modulated by the formation of heterodimers between pdgfra and pdgfrb. Phosphorylates pik3r1, plcg1, and ptpn11. Activation of plcg1 leads to the production of the cellular signaling molecules diacylglycerol and inositol 1,4,5-trisphosphate, mobilization of cytosolic Ca(2+) and the activation of protein kinase C. Phosphorylates pik3r1, the regulatory subunit of phosphatidylinositol 3-kinase, and thereby mediates activation of the akt1 signaling pathway. Mediates activation of hras and of the MAP kinases mapk1/erk2 and/or mapk3/erk1. Promotes activation of stat family members stat1, stat3 and stat5a and/or stat5b. Receptor signaling is down-regulated by protein phosphatases that dephosphorylate the receptor and its down-stream effectors, and by rapid internalization of the activated receptor. The sequence is that of Platelet-derived growth factor receptor alpha (pdgfra) from Xenopus laevis (African clawed frog).